The chain runs to 307 residues: Small ribosomal subunit biogenesis GTPase RsgA (307 aa).

The segment at 1-20 (MPSEHPFSDGISTPNPKETM) is disordered. Polar residues predominate over residues 10 to 20 (GISTPNPKETM). The CP-type G domain maps to 85 to 242 (RQDAWKTKLI…LIDSPGLQEF (158 aa)). GTP is bound by residues 135–138 (NKAD) and 184–192 (GQSGMGKST). Zn(2+) contacts are provided by cysteine 266, cysteine 271, histidine 273, and cysteine 279.

The protein belongs to the TRAFAC class YlqF/YawG GTPase family. RsgA subfamily. Monomer. Associates with 30S ribosomal subunit, binds 16S rRNA. Zn(2+) serves as cofactor.

It is found in the cytoplasm. In terms of biological role, one of several proteins that assist in the late maturation steps of the functional core of the 30S ribosomal subunit. Helps release RbfA from mature subunits. May play a role in the assembly of ribosomal proteins into the subunit. Circularly permuted GTPase that catalyzes slow GTP hydrolysis, GTPase activity is stimulated by the 30S ribosomal subunit. This is Small ribosomal subunit biogenesis GTPase RsgA from Neisseria meningitidis serogroup C / serotype 2a (strain ATCC 700532 / DSM 15464 / FAM18).